The sequence spans 340 residues: Glyceraldehyde-3-phosphate dehydrogenase (340 aa).

NAD(+) is bound by residues 11-12 (TI) and Gly109. 138 to 140 (SCN) is a D-glyceraldehyde 3-phosphate binding site. Residue Cys139 is the Nucleophile of the active site. An NAD(+)-binding site is contributed by Arg167. D-glyceraldehyde 3-phosphate is bound at residue 193–194 (HA). Position 300 (Gln300) interacts with NAD(+).

It belongs to the glyceraldehyde-3-phosphate dehydrogenase family. In terms of assembly, homotetramer.

It is found in the cytoplasm. The enzyme catalyses D-glyceraldehyde 3-phosphate + phosphate + NADP(+) = (2R)-3-phospho-glyceroyl phosphate + NADPH + H(+). The catalysed reaction is D-glyceraldehyde 3-phosphate + phosphate + NAD(+) = (2R)-3-phospho-glyceroyl phosphate + NADH + H(+). It functions in the pathway carbohydrate degradation; glycolysis; pyruvate from D-glyceraldehyde 3-phosphate: step 1/5. This Metallosphaera sedula (strain ATCC 51363 / DSM 5348 / JCM 9185 / NBRC 15509 / TH2) protein is Glyceraldehyde-3-phosphate dehydrogenase.